The sequence spans 399 residues: Probable peptidoglycan glycosyltransferase FtsW (399 aa).

Topologically, residues 1–25 (MTAAAPSKPLPRTPRVRQAYPLDYP) are cytoplasmic. The chain crosses the membrane as a helical span at residues 26–46 (LLLCALGLLAFGWVMVTSASM). Over 47 to 64 (SIAEACCQNPFHYSIRHA) the chain is Periplasmic. Residues 65-85 (IALGLALMLGLMAYSVPSHWW) traverse the membrane as a helical segment. Residues 86 to 88 (ERH) lie on the Cytoplasmic side of the membrane. A helical membrane pass occupies residues 89 to 109 (GVWLFLASALVLILVLIPGIG). Residues 110 to 117 (RTVNGATR) are Periplasmic-facing. The helical transmembrane segment at 118–138 (WIPLGPLNVQPSEFVKLFAIL) threads the bilayer. The Cytoplasmic segment spans residues 139-153 (YVAGYLVRHADKVVN). The chain crosses the membrane as a helical span at residues 154-174 (QLSGFIRPLILIGAAALLILM). The Periplasmic portion of the chain corresponds to 175 to 177 (QPD). Helical transmembrane passes span 178-198 (FGTT…GGAS) and 199-219 (LLPF…LVIF). The Periplasmic segment spans residues 220–281 (SPYRLERVVS…PEAHTDFLPS (62 aa)). The chain crosses the membrane as a helical span at residues 282 to 302 (VIGEELGLAGMLVLIAAFVFL). At 303–326 (SWRAMSIGVRAEALKRPFESYVAQ) the chain is on the cytoplasmic side. Residues 327–347 (GIGLWIGLQSFVNLGVNVGIL) traverse the membrane as a helical segment. The Periplasmic portion of the chain corresponds to 348–353 (PTKGLT). Residues 354-374 (LPFMSYGSNSLMVGCMAVAIL) traverse the membrane as a helical segment. Residues 375–399 (LRIDVMLRRVESEAKFKRGTPWSRA) lie on the Cytoplasmic side of the membrane.

Belongs to the SEDS family. FtsW subfamily.

It is found in the cell inner membrane. It carries out the reaction [GlcNAc-(1-&gt;4)-Mur2Ac(oyl-L-Ala-gamma-D-Glu-L-Lys-D-Ala-D-Ala)](n)-di-trans,octa-cis-undecaprenyl diphosphate + beta-D-GlcNAc-(1-&gt;4)-Mur2Ac(oyl-L-Ala-gamma-D-Glu-L-Lys-D-Ala-D-Ala)-di-trans,octa-cis-undecaprenyl diphosphate = [GlcNAc-(1-&gt;4)-Mur2Ac(oyl-L-Ala-gamma-D-Glu-L-Lys-D-Ala-D-Ala)](n+1)-di-trans,octa-cis-undecaprenyl diphosphate + di-trans,octa-cis-undecaprenyl diphosphate + H(+). It participates in cell wall biogenesis; peptidoglycan biosynthesis. Its function is as follows. Peptidoglycan polymerase that is essential for cell division. This is Probable peptidoglycan glycosyltransferase FtsW from Allochromatium vinosum (strain ATCC 17899 / DSM 180 / NBRC 103801 / NCIMB 10441 / D) (Chromatium vinosum).